A 260-amino-acid chain; its full sequence is Large ribosomal subunit protein uL4 (260 aa).

The protein belongs to the universal ribosomal protein uL4 family. Part of the 50S ribosomal subunit.

Functionally, one of the primary rRNA binding proteins, this protein initially binds near the 5'-end of the 23S rRNA. It is important during the early stages of 50S assembly. It makes multiple contacts with different domains of the 23S rRNA in the assembled 50S subunit and ribosome. Its function is as follows. Forms part of the polypeptide exit tunnel. The protein is Large ribosomal subunit protein uL4 of Methanopyrus kandleri (strain AV19 / DSM 6324 / JCM 9639 / NBRC 100938).